Consider the following 475-residue polypeptide: Aspartyl/glutamyl-tRNA(Asn/Gln) amidotransferase subunit B (475 aa).

This sequence belongs to the GatB/GatE family. GatB subfamily. As to quaternary structure, heterotrimer of A, B and C subunits.

It carries out the reaction L-glutamyl-tRNA(Gln) + L-glutamine + ATP + H2O = L-glutaminyl-tRNA(Gln) + L-glutamate + ADP + phosphate + H(+). The catalysed reaction is L-aspartyl-tRNA(Asn) + L-glutamine + ATP + H2O = L-asparaginyl-tRNA(Asn) + L-glutamate + ADP + phosphate + 2 H(+). Its function is as follows. Allows the formation of correctly charged Asn-tRNA(Asn) or Gln-tRNA(Gln) through the transamidation of misacylated Asp-tRNA(Asn) or Glu-tRNA(Gln) in organisms which lack either or both of asparaginyl-tRNA or glutaminyl-tRNA synthetases. The reaction takes place in the presence of glutamine and ATP through an activated phospho-Asp-tRNA(Asn) or phospho-Glu-tRNA(Gln). This chain is Aspartyl/glutamyl-tRNA(Asn/Gln) amidotransferase subunit B, found in Clostridium novyi (strain NT).